The following is a 1657-amino-acid chain: Thrombospondin type-1 domain-containing protein 7A (1657 aa).

The first 47 residues, 1–47 (MGLQARRWASGSRGAAGPRRGVLQLLPLPLPLPLLLLLLLRPGAGRA), serve as a signal peptide directing secretion. Topologically, residues 48 to 1607 (AAQGEAEAPT…FGPDGRLKTW (1560 aa)) are extracellular. TSP type-1 domains lie at 57 to 116 (TLYL…KVCD), 120 to 192 (ELYD…IPCQ), and 194 to 247 (DCIV…SPCE). Asn-234 is a glycosylation site (N-linked (GlcNAc...) asparagine). Residues 265 to 311 (MPHSRQVRQARRRGKNKEREKDRSKGVKDPEARELIKKKRNRNRQNR) form a disordered region. Residues 267–315 (HSRQVRQARRRGKNKEREKDRSKGVKDPEARELIKKKRNRNRQNRQENK) adopt a coiled-coil conformation. Basic residues predominate over residues 269–280 (RQVRQARRRGKN). The span at 281 to 299 (KEREKDRSKGVKDPEAREL) shows a compositional bias: basic and acidic residues. Basic residues predominate over residues 300–309 (IKKKRNRNRQ). Asn-332 carries an N-linked (GlcNAc...) asparagine glycan. TSP type-1 domains are found at residues 360–416 (ECQV…LSQG), 423–510 (ATYG…IPCP), 512–574 (ECEV…PACY), 634–695 (DCVL…HPCT), 696–769 (VYHW…LPCK), 771–831 (DCIV…QACQ), 832–904 (SYRW…IPCQ), 906–959 (DCQL…CPCD), 960–1033 (KYNA…IPCP), 1035–1095 (DCKL…SDCN), 1096–1163 (QYLW…LPCP), 1166–1220 (CVIS…KNCY), 1221–1284 (HYDY…VECP), 1286–1341 (NCQL…KPCY), 1342–1412 (RWQY…QPCP), and 1414–1475 (DCYL…GQCY). 3 disulfides stabilise this stretch: Cys-435/Cys-505, Cys-455/Cys-509, and Cys-466/Cys-494. N-linked (GlcNAc...) asparagine glycosylation occurs at Asn-450. The N-linked (GlcNAc...) asparagine glycan is linked to Asn-500. Intrachain disulfides connect Cys-635–Cys-677 and Cys-646–Cys-650. N-linked (GlcNAc...) asparagine glycosylation is present at Asn-679. Disulfide bonds link Cys-689-Cys-694, Cys-707-Cys-764, Cys-728-Cys-768, Cys-739-Cys-752, Cys-772-Cys-814, Cys-783-Cys-787, and Cys-824-Cys-830. Asn-717 is a glycosylation site (N-linked (GlcNAc...) asparagine). Asn-968 carries N-linked (GlcNAc...) asparagine glycosylation. 6 disulfides stabilise this stretch: Cys-972-Cys-1028, Cys-994-Cys-1032, Cys-1005-Cys-1018, Cys-1036-Cys-1073, Cys-1047-Cys-1051, and Cys-1090-Cys-1094. The N-linked (GlcNAc...) asparagine glycan is linked to Asn-1043. Asn-1182 carries an N-linked (GlcNAc...) asparagine glycan. Cys-1213 and Cys-1219 are disulfide-bonded. The N-linked (GlcNAc...) asparagine glycan is linked to Asn-1225. Disulfide bonds link Cys-1232-Cys-1279, Cys-1240-Cys-1283, Cys-1251-Cys-1264, Cys-1287-Cys-1325, Cys-1298-Cys-1302, Cys-1335-Cys-1340, Cys-1351-Cys-1407, Cys-1358-Cys-1411, Cys-1369-Cys-1388, Cys-1415-Cys-1459, Cys-1426-Cys-1430, and Cys-1469-Cys-1474. The N-linked (GlcNAc...) asparagine glycan is linked to Asn-1276. An N-linked (GlcNAc...) asparagine glycan is attached at Asn-1366. N-linked (GlcNAc...) asparagine glycosylation is found at Asn-1500 and Asn-1547. A disordered region spans residues 1570–1591 (DVKTSRAVHPTQPSSNPAGRGR). A helical membrane pass occupies residues 1608–1628 (VYGVAAGAFVLLIFIVSMIYL). Topologically, residues 1629–1657 (ACKKPKKPQRRQNNRLKPLTLAYDGDADM) are cytoplasmic.

Proteolytic cleavage in the extracellular region generates a 210 kDa soluble form. In terms of processing, extensively N-glycosylated. In terms of tissue distribution, detected on kidney podocytes along the glomerular capillary wall (at protein level).

It is found in the cell membrane. Its subcellular location is the cell projection. The protein localises to the secreted. Its function is as follows. Plays a role in actin cytoskeleton rearrangement. In terms of biological role, the soluble form promotes endothelial cell migration and filopodia formation during sprouting angiogenesis via a FAK-dependent mechanism. The polypeptide is Thrombospondin type-1 domain-containing protein 7A (THSD7A) (Homo sapiens (Human)).